The sequence spans 452 residues: tRNA modification GTPase MnmE (452 aa).

Arg-21, Glu-78, and Lys-118 together coordinate (6S)-5-formyl-5,6,7,8-tetrahydrofolate. The region spanning 214–375 is the TrmE-type G domain; sequence GMKVVIAGRP…LRDHLKQAMG (162 aa). Asn-224 is a binding site for K(+). GTP contacts are provided by residues 224-229, 243-249, and 268-271; these read NAGKSS, TDIAGTT, and DTAG. Ser-228 provides a ligand contact to Mg(2+). K(+)-binding residues include Thr-243, Ile-245, and Thr-248. Residue Thr-249 coordinates Mg(2+). Lys-452 is a binding site for (6S)-5-formyl-5,6,7,8-tetrahydrofolate.

This sequence belongs to the TRAFAC class TrmE-Era-EngA-EngB-Septin-like GTPase superfamily. TrmE GTPase family. In terms of assembly, homodimer. Heterotetramer of two MnmE and two MnmG subunits. K(+) is required as a cofactor.

The protein resides in the cytoplasm. Its function is as follows. Exhibits a very high intrinsic GTPase hydrolysis rate. Involved in the addition of a carboxymethylaminomethyl (cmnm) group at the wobble position (U34) of certain tRNAs, forming tRNA-cmnm(5)s(2)U34. This is tRNA modification GTPase MnmE from Haemophilus influenzae (strain 86-028NP).